We begin with the raw amino-acid sequence, 183 residues long: Ribosome rescue factor SmrB (183 aa).

The region spanning 98-173 (LDLHGLTQLQ…GDAALLVLIE (76 aa)) is the Smr domain.

It belongs to the SmrB family. As to quaternary structure, associates with collided ribosomes, but not with correctly translating polysomes.

In terms of biological role, acts as a ribosome collision sensor. Detects stalled/collided disomes (pairs of ribosomes where the leading ribosome is stalled and a second ribosome has collided with it) and endonucleolytically cleaves mRNA at the 5' boundary of the stalled ribosome. Stalled/collided disomes form a new interface (primarily via the 30S subunits) that binds SmrB. Cleaved mRNA becomes available for tmRNA ligation, leading to ribosomal subunit dissociation and rescue of stalled ribosomes. The protein is Ribosome rescue factor SmrB of Salmonella arizonae (strain ATCC BAA-731 / CDC346-86 / RSK2980).